A 193-amino-acid chain; its full sequence is ATP synthase subunit b 1 (193 aa).

A disordered region spans residues 13–32 (PAVTGGDTHSGTGVPAEAHG). The helical transmembrane segment at 40–60 (ATFPSQLLWLAITFGLFYLFL) threads the bilayer.

This sequence belongs to the ATPase B chain family. F-type ATPases have 2 components, F(1) - the catalytic core - and F(0) - the membrane proton channel. F(1) has five subunits: alpha(3), beta(3), gamma(1), delta(1), epsilon(1). F(0) has three main subunits: a(1), b(2) and c(10-14). The alpha and beta chains form an alternating ring which encloses part of the gamma chain. F(1) is attached to F(0) by a central stalk formed by the gamma and epsilon chains, while a peripheral stalk is formed by the delta and b chains.

It is found in the cell inner membrane. F(1)F(0) ATP synthase produces ATP from ADP in the presence of a proton or sodium gradient. F-type ATPases consist of two structural domains, F(1) containing the extramembraneous catalytic core and F(0) containing the membrane proton channel, linked together by a central stalk and a peripheral stalk. During catalysis, ATP synthesis in the catalytic domain of F(1) is coupled via a rotary mechanism of the central stalk subunits to proton translocation. In terms of biological role, component of the F(0) channel, it forms part of the peripheral stalk, linking F(1) to F(0). The chain is ATP synthase subunit b 1 from Mesorhizobium japonicum (strain LMG 29417 / CECT 9101 / MAFF 303099) (Mesorhizobium loti (strain MAFF 303099)).